The sequence spans 112 residues: Putative pterin-4-alpha-carbinolamine dehydratase (112 aa).

The protein belongs to the pterin-4-alpha-carbinolamine dehydratase family.

It catalyses the reaction (4aS,6R)-4a-hydroxy-L-erythro-5,6,7,8-tetrahydrobiopterin = (6R)-L-erythro-6,7-dihydrobiopterin + H2O. The polypeptide is Putative pterin-4-alpha-carbinolamine dehydratase (Shewanella frigidimarina (strain NCIMB 400)).